The sequence spans 389 residues: Mitochondrial tRNA-specific 2-thiouridylase 1 (389 aa).

ATP contacts are provided by residues 8-15 (GVSGGVDS) and Met-34. The tract at residues 94-96 (NPD) is interaction with target base in tRNA. The Nucleophile role is filled by Cys-99. Cys-99 and Cys-205 form a disulfide bridge. Gly-124 is an ATP binding site. An interaction with tRNA region spans residues 154–156 (KDQ). Residue Cys-205 is the Cysteine persulfide intermediate of the active site. The interaction with tRNA stretch occupies residues 317–318 (QH).

This sequence belongs to the MnmA/TRMU family.

The protein resides in the mitochondrion. It catalyses the reaction 5-taurinomethyluridine(34) in tRNA + S-sulfanyl-L-cysteinyl-[protein] + AH2 + ATP = 5-taurinomethyl-2-thiouridine(34) in tRNA + L-cysteinyl-[protein] + A + AMP + diphosphate + H(+). Functionally, catalyzes the 2-thiolation of uridine at the wobble position (U34) of mitochondrial tRNA(Lys), tRNA(Glu) and tRNA(Gln). Required for the formation of 5-taurinomethyl-2-thiouridine (tm5s2U) of mitochondrial tRNA(Lys), tRNA(Glu), and tRNA(Gln) at the wobble position. ATP is required to activate the C2 atom of the wobble base. The sequence is that of Mitochondrial tRNA-specific 2-thiouridylase 1 from Drosophila melanogaster (Fruit fly).